The primary structure comprises 336 residues: N-lysine methyltransferase KMT5A (336 aa).

Residues 1-112 form a disordered region; it reads MGRGKKMSKP…KPSEQRETEC (112 aa). The span at 67–93 shows a compositional bias: basic and acidic residues; it reads SVAHHESKCPGKPLTETRKKAEVEKKR. Residues 200 to 321 form the SET domain; it reads EGMKMDMITG…VGEELLYDYG (122 aa). Residues 210-212, tyrosine 255, and 282-283 contribute to the S-adenosyl-L-methionine site; these read KGR and NH.

This sequence belongs to the class V-like SAM-binding methyltransferase superfamily. Histone-lysine methyltransferase family. PR/SET subfamily.

The protein localises to the nucleus. It is found in the chromosome. It catalyses the reaction L-lysyl(20)-[histone H4] + S-adenosyl-L-methionine = N(6)-methyl-L-lysyl(20)-[histone H4] + S-adenosyl-L-homocysteine + H(+). The enzyme catalyses L-lysyl-[protein] + S-adenosyl-L-methionine = N(6)-methyl-L-lysyl-[protein] + S-adenosyl-L-homocysteine + H(+). Functionally, protein-lysine N-methyltransferase that monomethylates both histones and non-histone proteins. Specifically monomethylates 'Lys-20' of histone H4 (H4K20me1). H4K20me1 is enriched during mitosis and represents a specific tag for epigenetic transcriptional repression. Mainly functions in euchromatin regions, thereby playing a central role in the silencing of euchromatic genes. Required for cell proliferation, probably by contributing to the maintenance of proper higher-order structure of DNA during mitosis. Involved in chromosome condensation and proper cytokinesis. Nucleosomes are preferred as substrate compared to free histones. Mediates monomethylation of p53/TP53 at 'Lys-382', leading to repress p53/TP53-target genes. Plays a negative role in TGF-beta response regulation and a positive role in cell migration. The chain is N-lysine methyltransferase KMT5A from Xenopus tropicalis (Western clawed frog).